Reading from the N-terminus, the 358-residue chain is Alanine racemase (358 aa).

The Proton acceptor; specific for D-alanine role is filled by lysine 35. Residue lysine 35 is modified to N6-(pyridoxal phosphate)lysine. Arginine 130 serves as a coordination point for substrate. The active-site Proton acceptor; specific for L-alanine is tyrosine 255. Residue methionine 303 participates in substrate binding.

The protein belongs to the alanine racemase family. The cofactor is pyridoxal 5'-phosphate.

It catalyses the reaction L-alanine = D-alanine. It functions in the pathway amino-acid biosynthesis; D-alanine biosynthesis; D-alanine from L-alanine: step 1/1. In terms of biological role, catalyzes the interconversion of L-alanine and D-alanine. May also act on other amino acids. The polypeptide is Alanine racemase (alr) (Shewanella sediminis (strain HAW-EB3)).